We begin with the raw amino-acid sequence, 258 residues long: MPKTLTKKLNAIKAAGKGIFVPYIMAGDHEKGLDGLAETIHFLEDLGVSAIEVGIPFSDPVADGPVIEEAGLRSLAHGTSTQALVETLKTIETEIPLVIMTYFNPLFQYGVENFVKDLADTAVKGLIIPDLPHEHANFVEPFLADTDIALIPLVSLTTGIERQKELIEGAEGFVYAVAINGVTGKSGNYRADLDKHLAQLHQVADIPVLTGFGVSSQADLERFNAVSDGVIVGSKIVKALHQGEPIQDFIKQAVAYQK.

Active-site proton acceptor residues include E52 and D63.

It belongs to the TrpA family. Tetramer of two alpha and two beta chains.

The catalysed reaction is (1S,2R)-1-C-(indol-3-yl)glycerol 3-phosphate + L-serine = D-glyceraldehyde 3-phosphate + L-tryptophan + H2O. Its pathway is amino-acid biosynthesis; L-tryptophan biosynthesis; L-tryptophan from chorismate: step 5/5. Its function is as follows. The alpha subunit is responsible for the aldol cleavage of indoleglycerol phosphate to indole and glyceraldehyde 3-phosphate. This is Tryptophan synthase alpha chain from Streptococcus pneumoniae (strain Taiwan19F-14).